A 629-amino-acid chain; its full sequence is uncharacterized protein (629 aa).

Over residues 1-11 (MSDDQQNGKQN) the composition is skewed to polar residues. Disordered stretches follow at residues 1–24 (MSDD…EQDD), 62–87 (SNNN…SNYN), 197–464 (SEES…SSLI), and 493–560 (PTPT…STPD). Residues 247–264 (PSSSSSSSSLINSPTTSK) are compositionally biased toward low complexity. Over residues 274–288 (PTINPKSLFGLSSTI) the composition is skewed to polar residues. Positions 294–430 (VKTEKEKEKE…DETLNKETPH (137 aa)) are enriched in basic and acidic residues. 2 stretches are compositionally biased toward low complexity: residues 434–464 (PHIT…SSLI) and 493–554 (PTPT…NNNN).

This is an uncharacterized protein from Dictyostelium discoideum (Social amoeba).